The sequence spans 465 residues: E3 ubiquitin-protein ligase TRIM38 (465 aa).

The RING-type zinc finger occupies 16 to 63; the sequence is CSICLSLMTNPVSINCGHSYCHLCITDFFKNPSQKQLRQETFCCPQCR. The residue at position 70 (Ser70) is a Phosphoserine. The B box-type zinc finger occupies 88–129; that stretch reads DQEMSCEEHGEQFHLFCEDEGQLICWRCERAPQHKGHTTALV. 4 residues coordinate Zn(2+): Cys93, His96, Cys115, and His121. Residues 274–465 form the B30.2/SPRY domain; sequence CNVSKLYFDV…SPLFLPPPGD (192 aa).

As to quaternary structure, interacts (via B30.2/SPRY domain) with TAB2 and TAB3. In terms of tissue distribution, ubiquitous.

The protein localises to the cytoplasm. It catalyses the reaction S-ubiquitinyl-[E2 ubiquitin-conjugating enzyme]-L-cysteine + [acceptor protein]-L-lysine = [E2 ubiquitin-conjugating enzyme]-L-cysteine + N(6)-ubiquitinyl-[acceptor protein]-L-lysine.. The protein operates within protein modification; protein ubiquitination. It participates in protein modification; protein sumoylation. E3 ubiquitin-protein and E3 SUMO-protein ligase that acts as a regulator of innate immunity. Acts as a negative regulator of type I interferon IFN-beta production by catalyzing 'Lys-48'-linked polyubiquitination of AZI2/NAP1, leading to its degradation. Mediates 'Lys-48'-linked polyubiquitination and proteasomal degradation of the critical TLR adapter TICAM1, inhibiting TLR3-mediated type I interferon signaling. Acts as positive regulator of the cGAS-STING pathway by acting as a E3 SUMO-protein ligase: mediates sumoylation of CGAS and STING, preventing their degradation and thereby activating the innate immune response to DNA virus. Also acts as a negative regulator of NF-kappa-B signaling independently of its E3 protein ligase activity by promoting lysosome-dependent degradation of TAB2 and TAB3 adapters. In Homo sapiens (Human), this protein is E3 ubiquitin-protein ligase TRIM38.